We begin with the raw amino-acid sequence, 277 residues long: 3-methyl-2-oxobutanoate hydroxymethyltransferase (277 aa).

Asp43 and Asp82 together coordinate Mg(2+). 3-methyl-2-oxobutanoate is bound by residues 43-44, Asp82, and Lys112; that span reads DS. Glu114 is a binding site for Mg(2+). Catalysis depends on Glu181, which acts as the Proton acceptor.

This sequence belongs to the PanB family. As to quaternary structure, homodecamer; pentamer of dimers. Requires Mg(2+) as cofactor.

It localises to the cytoplasm. The catalysed reaction is 3-methyl-2-oxobutanoate + (6R)-5,10-methylene-5,6,7,8-tetrahydrofolate + H2O = 2-dehydropantoate + (6S)-5,6,7,8-tetrahydrofolate. It functions in the pathway cofactor biosynthesis; (R)-pantothenate biosynthesis; (R)-pantoate from 3-methyl-2-oxobutanoate: step 1/2. Catalyzes the reversible reaction in which hydroxymethyl group from 5,10-methylenetetrahydrofolate is transferred onto alpha-ketoisovalerate to form ketopantoate. This chain is 3-methyl-2-oxobutanoate hydroxymethyltransferase, found in Bacillus licheniformis (strain ATCC 14580 / DSM 13 / JCM 2505 / CCUG 7422 / NBRC 12200 / NCIMB 9375 / NCTC 10341 / NRRL NRS-1264 / Gibson 46).